A 233-amino-acid polypeptide reads, in one-letter code: Small ribosomal subunit protein uS5 (233 aa).

Basic and acidic residues-rich tracts occupy residues 1 to 12 (MANESEIQKTEN) and 39 to 54 (RGRD…RNEE). The interval 1-54 (MANESEIQKTENAEVANAANGTNPNNERRGRGGRGRGGRGRDGRGRRDDRRNEE) is disordered. The region spanning 59 to 122 (LIEKLVHINR…AAAKKTMIRV (64 aa)) is the S5 DRBM domain.

It belongs to the universal ribosomal protein uS5 family. Part of the 30S ribosomal subunit. Contacts proteins S4 and S8.

Its function is as follows. With S4 and S12 plays an important role in translational accuracy. In terms of biological role, located at the back of the 30S subunit body where it stabilizes the conformation of the head with respect to the body. This Zymomonas mobilis subsp. mobilis (strain ATCC 31821 / ZM4 / CP4) protein is Small ribosomal subunit protein uS5.